Here is a 426-residue protein sequence, read N- to C-terminus: Serine--tRNA ligase (426 aa).

The segment covering 41-60 (QTRTEQLQAERNARSKSIGQ) has biased composition (polar residues). A disordered region spans residues 41–64 (QTRTEQLQAERNARSKSIGQAKQR). 233-235 (TAE) serves as a coordination point for L-serine. 264–266 (RSE) contributes to the ATP binding site. Position 287 (Glu-287) interacts with L-serine. 351 to 354 (EISS) is a binding site for ATP. An L-serine-binding site is contributed by Ser-387.

This sequence belongs to the class-II aminoacyl-tRNA synthetase family. Type-1 seryl-tRNA synthetase subfamily. As to quaternary structure, homodimer. The tRNA molecule binds across the dimer.

The protein localises to the cytoplasm. The catalysed reaction is tRNA(Ser) + L-serine + ATP = L-seryl-tRNA(Ser) + AMP + diphosphate + H(+). It carries out the reaction tRNA(Sec) + L-serine + ATP = L-seryl-tRNA(Sec) + AMP + diphosphate + H(+). It functions in the pathway aminoacyl-tRNA biosynthesis; selenocysteinyl-tRNA(Sec) biosynthesis; L-seryl-tRNA(Sec) from L-serine and tRNA(Sec): step 1/1. Catalyzes the attachment of serine to tRNA(Ser). Is also able to aminoacylate tRNA(Sec) with serine, to form the misacylated tRNA L-seryl-tRNA(Sec), which will be further converted into selenocysteinyl-tRNA(Sec). This is Serine--tRNA ligase from Pseudomonas fluorescens (strain ATCC BAA-477 / NRRL B-23932 / Pf-5).